The primary structure comprises 493 residues: Dipeptide permease D (493 aa).

The Cytoplasmic portion of the chain corresponds to 1–13 (MNKHASQPRAIYY). A helical membrane pass occupies residues 14–34 (VVALQIWEYFSFYGMRALLIL). Topologically, residues 35 to 48 (YLTNQLKYNDTHAY) are periplasmic. Residues 49 to 69 (ELFSAYCSLVYVTPILGGFLA) traverse the membrane as a helical segment. Over 70 to 77 (DKVLGNRM) the chain is Cytoplasmic. The helical transmembrane segment at 78–98 (AVMLGALLMAIGHVVLGASEI) threads the bilayer. Residues 99 to 100 (HP) are Periplasmic-facing. The chain crosses the membrane as a helical span at residues 101 to 121 (SFLYLSLAIIVCGYGLFKSNV). Residues 122 to 137 (SCLLGELYEPTDPRRD) lie on the Cytoplasmic side of the membrane. Residues 138–158 (GGFSLMYAAGNVGSIIAPIAC) form a helical membrane-spanning segment. Residues 159-166 (GYAQEEYS) lie on the Periplasmic side of the membrane. The chain crosses the membrane as a helical span at residues 167–187 (WAMGFGLAAVGMIAGLVIFLC). Topologically, residues 188–211 (GNRHFTHTRGVNKKVLRATNFLLP) are cytoplasmic. A helical membrane pass occupies residues 212-232 (NWGWLLVLLVATPALITILFW). The Periplasmic portion of the chain corresponds to 233–234 (KE). The chain crosses the membrane as a helical span at residues 235–255 (WSVYALIVATIIGLGVLAKIY). Over 256-266 (RKAENQKQRKE) the chain is Cytoplasmic. The helical transmembrane segment at 267–287 (LGLIVTLTFFSMLFWAFAQQG) threads the bilayer. Residues 288–311 (GSSISLYIDRFVNRDMFGYTVPTA) are Periplasmic-facing. A helical transmembrane segment spans residues 312–332 (MFQSINAFAVMLCGVFLAWVV). Residues 333-343 (KESVAGNRTVR) lie on the Cytoplasmic side of the membrane. The helical transmembrane segment at 344 to 364 (IWGKFALGLGLMSAGFCILTL) threads the bilayer. Over 365–378 (SARWSAMYGHSSLP) the chain is Periplasmic. A helical membrane pass occupies residues 379–399 (LMVLGLAVMGFAELFIDPVAM). Over 400–412 (SQITRIEIPGVTG) the chain is Cytoplasmic. The chain crosses the membrane as a helical span at residues 413-433 (VLTGIYMLLSGAIANYLAGVI). Residues 434–461 (ADQTSQASFDASGAINYSINAYIEVFDQ) are Periplasmic-facing. A helical transmembrane segment spans residues 462–482 (ITWGALACVGLVLMIWLYQAL). The Cytoplasmic portion of the chain corresponds to 483–493 (KFRNRALALES).

Belongs to the major facilitator superfamily. Proton-dependent oligopeptide transporter (POT/PTR) (TC 2.A.17) family. DtpD subfamily.

The protein localises to the cell inner membrane. In terms of biological role, probable proton-dependent permease that transports dipeptides. This chain is Dipeptide permease D (dtpD), found in Escherichia coli (strain K12).